The primary structure comprises 169 residues: Disulfide bond formation protein B 1 (169 aa).

Topologically, residues 1–14 are cytoplasmic; it reads MSDNTLYLRREKRF. The helical transmembrane segment at 15 to 31 threads the bilayer; it reads LVLLGIICLALIGGALY. Residues 32–49 are Periplasmic-facing; the sequence is MQVVLDEAPCPLCILQRY. C41 and C44 are oxidised to a cystine. The chain crosses the membrane as a helical span at residues 50–65; it reads ALLFIAIFAFIGAAMP. Topologically, residues 66–72 are cytoplasmic; that stretch reads GRRSVTA. A helical membrane pass occupies residues 73 to 89; the sequence is FETLVTLSALGGIAAAG. The Periplasmic segment spans residues 90 to 144; sequence RHVWILAHPSDSCGIDVLQPIVDGLPLATLFPTGFQVSGFCTTPYPPVLGLSLAQ. C102 and C130 are oxidised to a cystine. The helical transmembrane segment at 145-163 threads the bilayer; the sequence is WALTAFVLTAVLVPACIIR. The Cytoplasmic portion of the chain corresponds to 164–169; that stretch reads NRRKPY.

This sequence belongs to the DsbB family.

The protein localises to the cell inner membrane. Functionally, required for disulfide bond formation in some periplasmic proteins. Acts by oxidizing the DsbA protein. The protein is Disulfide bond formation protein B 1 of Pseudomonas syringae pv. syringae (strain B728a).